The primary structure comprises 231 residues: Enolase-phosphatase E1 (231 aa).

Positions 11 and 13 each coordinate Mg(2+). Residues 125–126 (SS) and K162 each bind substrate. D188 is a binding site for Mg(2+).

Belongs to the HAD-like hydrolase superfamily. MasA/MtnC family. As to quaternary structure, monomer. It depends on Mg(2+) as a cofactor.

Its subcellular location is the cytoplasm. It localises to the nucleus. The enzyme catalyses 5-methylsulfanyl-2,3-dioxopentyl phosphate + H2O = 1,2-dihydroxy-5-(methylsulfanyl)pent-1-en-3-one + phosphate. Its pathway is amino-acid biosynthesis; L-methionine biosynthesis via salvage pathway; L-methionine from S-methyl-5-thio-alpha-D-ribose 1-phosphate: step 3/6. It participates in amino-acid biosynthesis; L-methionine biosynthesis via salvage pathway; L-methionine from S-methyl-5-thio-alpha-D-ribose 1-phosphate: step 4/6. In terms of biological role, bifunctional enzyme that catalyzes the enolization of 2,3-diketo-5-methylthiopentyl-1-phosphate (DK-MTP-1-P) into the intermediate 2-hydroxy-3-keto-5-methylthiopentenyl-1-phosphate (HK-MTPenyl-1-P), which is then dephosphorylated to form the acireductone 1,2-dihydroxy-3-keto-5-methylthiopentene (DHK-MTPene). This Pyricularia oryzae (strain 70-15 / ATCC MYA-4617 / FGSC 8958) (Rice blast fungus) protein is Enolase-phosphatase E1.